A 192-amino-acid polypeptide reads, in one-letter code: Phosphoheptose isomerase (192 aa).

The SIS domain maps to L35–N192. N50–G52 serves as a coordination point for substrate. 2 residues coordinate Zn(2+): H59 and E63. Substrate contacts are provided by residues E63, N92–D93, S118–S120, S123, and Q170. Residues Q170 and H178 each contribute to the Zn(2+) site.

The protein belongs to the SIS family. GmhA subfamily. In terms of assembly, homotetramer. Zn(2+) serves as cofactor.

It is found in the cytoplasm. The enzyme catalyses 2 D-sedoheptulose 7-phosphate = D-glycero-alpha-D-manno-heptose 7-phosphate + D-glycero-beta-D-manno-heptose 7-phosphate. Its pathway is carbohydrate biosynthesis; D-glycero-D-manno-heptose 7-phosphate biosynthesis; D-glycero-alpha-D-manno-heptose 7-phosphate and D-glycero-beta-D-manno-heptose 7-phosphate from sedoheptulose 7-phosphate: step 1/1. It functions in the pathway bacterial outer membrane biogenesis; LPS core biosynthesis. Functionally, catalyzes the isomerization of sedoheptulose 7-phosphate in D-glycero-D-manno-heptose 7-phosphate. The protein is Phosphoheptose isomerase of Helicobacter pylori (strain ATCC 700392 / 26695) (Campylobacter pylori).